We begin with the raw amino-acid sequence, 300 residues long: F-box/LRR-repeat protein 15 (300 aa).

M1 carries the post-translational modification N-acetylmethionine. Positions 19 to 66 constitute an F-box domain; sequence LLDLPWEDVLLPHVLNWVPLRQLLRLQRVSRAFRALVQLHLARLRRFD. The interaction with SMURF1 stretch occupies residues 113–269; it reads NPQLRSVALA…EPSLSRLRKR (157 aa). LRR repeat units lie at residues 141–162, 167–188, 194–215, 220–241, and 246–267; these read RLQRLSLAHCDWVDGLALRGLA, ALEELDLTACRQLKDEAIVYLA, GLRSLSLAVNANVGDTAVQELA, QLEHLDLTGCLRVGSDGVRTLA, and ALRSLRVRHCHHVAEPSLSRLR.

The protein belongs to the FBXL15 family. As to quaternary structure, part of the SCF (SKP1-CUL1-F-box) E3 ubiquitin-protein ligase complex SCF(FBXL15) composed of CUL1, SKP1, RBX1 and FBXL15. As to expression, expressed in heart, liver, spleen, bone, muscle, brain and kidney (at protein level).

It is found in the cytoplasm. Its pathway is protein modification; protein ubiquitination. Substrate recognition component of a SCF (SKP1-CUL1-F-box protein) E3 ubiquitin-protein ligase complex which mediates the ubiquitination and subsequent proteasomal degradation of SMURF1, thereby acting as a positive regulator of the BMP signaling pathway. Required for dorsal/ventral pattern formation and bone mass maintenance. Also mediates ubiquitination of SMURF2 and WWP2. In Mus musculus (Mouse), this protein is F-box/LRR-repeat protein 15 (Fbxl15).